We begin with the raw amino-acid sequence, 234 residues long: Phosphoribosylaminoimidazole-succinocarboxamide synthase (234 aa).

This sequence belongs to the SAICAR synthetase family.

The enzyme catalyses 5-amino-1-(5-phospho-D-ribosyl)imidazole-4-carboxylate + L-aspartate + ATP = (2S)-2-[5-amino-1-(5-phospho-beta-D-ribosyl)imidazole-4-carboxamido]succinate + ADP + phosphate + 2 H(+). It participates in purine metabolism; IMP biosynthesis via de novo pathway; 5-amino-1-(5-phospho-D-ribosyl)imidazole-4-carboxamide from 5-amino-1-(5-phospho-D-ribosyl)imidazole-4-carboxylate: step 1/2. In Pyrococcus abyssi (strain GE5 / Orsay), this protein is Phosphoribosylaminoimidazole-succinocarboxamide synthase (purC).